A 102-amino-acid polypeptide reads, in one-letter code: CRISPR-associated endoribonuclease Cas2 1 (102 aa).

A Mg(2+)-binding site is contributed by aspartate 17.

This sequence belongs to the CRISPR-associated endoribonuclease Cas2 protein family. In terms of assembly, homodimer, forms a heterotetramer with a Cas1 homodimer. It depends on Mg(2+) as a cofactor.

Functionally, CRISPR (clustered regularly interspaced short palindromic repeat), is an adaptive immune system that provides protection against mobile genetic elements (viruses, transposable elements and conjugative plasmids). CRISPR clusters contain sequences complementary to antecedent mobile elements and target invading nucleic acids. CRISPR clusters are transcribed and processed into CRISPR RNA (crRNA). Functions as a ssRNA-specific endoribonuclease. Involved in the integration of spacer DNA into the CRISPR cassette. In Rhodospirillum rubrum (strain ATCC 11170 / ATH 1.1.1 / DSM 467 / LMG 4362 / NCIMB 8255 / S1), this protein is CRISPR-associated endoribonuclease Cas2 1.